Consider the following 316-residue polypeptide: Pantothenate kinase (316 aa).

95–102 (GSVAVGKS) contributes to the ATP binding site.

It belongs to the prokaryotic pantothenate kinase family.

Its subcellular location is the cytoplasm. It catalyses the reaction (R)-pantothenate + ATP = (R)-4'-phosphopantothenate + ADP + H(+). It participates in cofactor biosynthesis; coenzyme A biosynthesis; CoA from (R)-pantothenate: step 1/5. The chain is Pantothenate kinase from Serratia proteamaculans (strain 568).